The sequence spans 97 residues: Integration host factor subunit alpha (97 aa).

Belongs to the bacterial histone-like protein family. In terms of assembly, heterodimer of an alpha and a beta chain.

Functionally, this protein is one of the two subunits of integration host factor, a specific DNA-binding protein that functions in genetic recombination as well as in transcriptional and translational control. This chain is Integration host factor subunit alpha, found in Acinetobacter baylyi (strain ATCC 33305 / BD413 / ADP1).